The sequence spans 66 residues: Small ribosomal subunit protein bS21A (66 aa).

Residues 34 to 46 are compositionally biased toward basic residues; it reads KHYEKPSVKKKRK. The interval 34–66 is disordered; it reads KHYEKPSVKKKRKQMEAERKRRKAQRFRKPDRD.

This sequence belongs to the bacterial ribosomal protein bS21 family.

In Geobacter sulfurreducens (strain ATCC 51573 / DSM 12127 / PCA), this protein is Small ribosomal subunit protein bS21A.